A 638-amino-acid chain; its full sequence is DNA mismatch repair protein MutL (638 aa).

The disordered stretch occupies residues 404–433 (FGTQTNAFGSMATPRDNSRGNYSAGESRQR).

This sequence belongs to the DNA mismatch repair MutL/HexB family.

Its function is as follows. This protein is involved in the repair of mismatches in DNA. It is required for dam-dependent methyl-directed DNA mismatch repair. May act as a 'molecular matchmaker', a protein that promotes the formation of a stable complex between two or more DNA-binding proteins in an ATP-dependent manner without itself being part of a final effector complex. This is DNA mismatch repair protein MutL from Shewanella baltica (strain OS195).